Reading from the N-terminus, the 146-residue chain is MGTVLAFDFGEKRIGVATGETMLCSAHPLTTIHAESNEDRFAAIGKLVAEWQPEQLVVGLPTHADGTPHEMTRLATKFGERLARRFNLPVSFADERLTSLDAEARLRETGRNSKSAKPLLDAVAAQLILQTWFESPHHVIPTQPSA.

Belongs to the YqgF nuclease family.

It localises to the cytoplasm. Its function is as follows. Could be a nuclease involved in processing of the 5'-end of pre-16S rRNA. The protein is Putative pre-16S rRNA nuclease of Dechloromonas aromatica (strain RCB).